Here is a 151-residue protein sequence, read N- to C-terminus: Flagellar assembly factor FliW (151 aa).

This sequence belongs to the FliW family. As to quaternary structure, interacts with translational regulator CsrA and flagellin(s).

It localises to the cytoplasm. In terms of biological role, acts as an anti-CsrA protein, binds CsrA and prevents it from repressing translation of its target genes, one of which is flagellin. Binds to flagellin and participates in the assembly of the flagellum. In Natranaerobius thermophilus (strain ATCC BAA-1301 / DSM 18059 / JW/NM-WN-LF), this protein is Flagellar assembly factor FliW.